We begin with the raw amino-acid sequence, 313 residues long: Malate dehydrogenase (313 aa).

NAD(+) is bound by residues 8 to 13 and Asp-33; that span reads GAGNVG. The substrate site is built by Arg-83 and Arg-89. Residues Asn-96 and 119–121 contribute to the NAD(+) site; that span reads ISN. The substrate site is built by Asn-121 and Arg-152. The active-site Proton acceptor is His-176.

It belongs to the LDH/MDH superfamily. MDH type 3 family.

The enzyme catalyses (S)-malate + NAD(+) = oxaloacetate + NADH + H(+). Catalyzes the reversible oxidation of malate to oxaloacetate. The protein is Malate dehydrogenase of Bacteroides thetaiotaomicron (strain ATCC 29148 / DSM 2079 / JCM 5827 / CCUG 10774 / NCTC 10582 / VPI-5482 / E50).